The sequence spans 86 residues: Small ribosomal subunit protein uS17 (86 aa).

Belongs to the universal ribosomal protein uS17 family. Part of the 30S ribosomal subunit.

Its function is as follows. One of the primary rRNA binding proteins, it binds specifically to the 5'-end of 16S ribosomal RNA. This is Small ribosomal subunit protein uS17 from Marinomonas sp. (strain MWYL1).